An 83-amino-acid polypeptide reads, in one-letter code: Exodeoxyribonuclease 7 small subunit (83 aa).

Belongs to the XseB family. In terms of assembly, heterooligomer composed of large and small subunits.

The protein resides in the cytoplasm. The catalysed reaction is Exonucleolytic cleavage in either 5'- to 3'- or 3'- to 5'-direction to yield nucleoside 5'-phosphates.. In terms of biological role, bidirectionally degrades single-stranded DNA into large acid-insoluble oligonucleotides, which are then degraded further into small acid-soluble oligonucleotides. The chain is Exodeoxyribonuclease 7 small subunit from Bradyrhizobium sp. (strain ORS 278).